A 556-amino-acid chain; its full sequence is Outer spore wall assembly protein SHE10 (556 aa).

The signal sequence occupies residues 1 to 21 (MRFLTKFLLFLATVYFGLKYA). Residues 135–201 (NKNLKRHVER…KQITSDVKKT (67 aa)) are a coiled coil. Positions 190–208 (EAKQITSDVKKTVESEIKK) are enriched in basic and acidic residues. Disordered regions lie at residues 190–263 (EAKQ…EDIT) and 534–556 (RKEA…PISA). A compositionally biased stretch (low complexity) spans 220–244 (IVSTSTIVKTITRTRHSSSSTTSTK). The segment covering 245–256 (SAEETSEKNLET) has biased composition (basic and acidic residues). Positions 481-547 (KISEFKLLLD…GEVNESSEEE (67 aa)) form a coiled coil.

It belongs to the SHE10 family. In terms of assembly, component of the mitochondria-localized RNase mitochondrial RNA-processing (RNase MRP) composed of one single RNA encoded by the NME1 gene and at least 31 proteins. Absent in the nucleus-localized RNase MRP (NuMRP).

It is found in the mitochondrion. In terms of biological role, involved in spore wall assembly. May be a component of the mitochondrial RNase MRP (MtMRP), a ribonucleoprotein endoribonuclease involved in the cleaving RNA transcripts to generate primers for DNA replication in mitochondria. The sequence is that of Outer spore wall assembly protein SHE10 from Candida glabrata (strain ATCC 2001 / BCRC 20586 / JCM 3761 / NBRC 0622 / NRRL Y-65 / CBS 138) (Yeast).